The sequence spans 57 residues: UPF0391 membrane protein NE0130 (57 aa).

The next 2 membrane-spanning stretches (helical) occupy residues 1–21 and 33–53; these read MLKW…FGFR and FLFF…LLGI.

The protein belongs to the UPF0391 family.

Its subcellular location is the cell membrane. The polypeptide is UPF0391 membrane protein NE0130 (Nitrosomonas europaea (strain ATCC 19718 / CIP 103999 / KCTC 2705 / NBRC 14298)).